Consider the following 84-residue polypeptide: Polcalcin Nic t 1 (84 aa).

2 EF-hand domains span residues 6–40 (QDIA…MLGS) and 41–76 (VTSE…NRGL). Ca(2+)-binding residues include Asp19, Asn21, Asp23, Lys25, Glu30, Asp54, Asp56, Asp58, and Glu65.

This Nicotiana tabacum (Common tobacco) protein is Polcalcin Nic t 1 (Nict1).